A 1328-amino-acid chain; its full sequence is Myb-binding protein 1A (1328 aa).

Positions M1 to P22 are disordered. The tract at residues M1–E582 is interaction with MYB. S11 carries the post-translational modification Phosphoserine. Residues K71 and K158 each carry the N6-acetyllysine modification. 2 short sequence motifs (nuclear export signal) span residues S240–V258 and K263–F281. The tract at residues S698–D753 is disordered. The segment covering D703–D721 has biased composition (basic and acidic residues). Acidic residues predominate over residues S734 to V752. Residue S775 is modified to Phosphoserine. Positions R1146–L1292 are disordered. Basic and acidic residues predominate over residues P1147–E1156. A Glycyl lysine isopeptide (Lys-Gly) (interchain with G-Cter in SUMO2) cross-link involves residue K1148. The segment at K1151–P1328 is required for nuclear and nucleolar localization. S1159 and S1163 each carry phosphoserine. Positions S1166–R1184 are enriched in basic residues. S1186 carries the post-translational modification Phosphoserine. Residues T1190 and T1196 each carry the phosphothreonine modification. S1207 carries the post-translational modification Phosphoserine. Positions G1209–A1218 are enriched in basic residues. At S1232 the chain carries Phosphoserine. A Phosphothreonine modification is found at T1239. Phosphoserine is present on S1241. A Phosphothreonine modification is found at T1244. Phosphoserine occurs at positions 1248 and 1267. Position 1269 is a phosphothreonine (T1269). Residues S1290 and S1303 each carry the phosphoserine modification. A disordered region spans residues I1306 to P1328. R1307 carries the citrulline modification. S1308, S1310, and S1314 each carry phosphoserine. The span at A1316–P1328 shows a compositional bias: basic residues.

Belongs to the MYBBP1A family. In terms of assembly, binds to and represses JUN and MYB via the leucine zipper regions present in these proteins. Also binds to and represses PPARGC1A: this interaction is abrogated when PPARGC1A is phosphorylated by MAPK1/ERK. Binds to and stimulates transcription by AHR. Binds to KPNA2. Interacts with CLOCK and CRY1. Component of the B-WICH complex, at least composed of SMARCA5/SNF2H, BAZ1B/WSTF, SF3B1, DEK, MYO1C, ERCC6, MYBBP1A and DDX21. Post-translationally, citrullinated by PADI4.

The protein localises to the cytoplasm. The protein resides in the nucleus. Its subcellular location is the nucleolus. May activate or repress transcription via interactions with sequence specific DNA-binding proteins. Repression may be mediated at least in part by histone deacetylase activity (HDAC activity). Acts as a corepressor and in concert with CRY1, represses the transcription of the core circadian clock component PER2. Preferentially binds to dimethylated histone H3 'Lys-9' (H3K9me2) on the PER2 promoter. Has a role in rRNA biogenesis together with PWP1. The sequence is that of Myb-binding protein 1A (MYBBP1A) from Homo sapiens (Human).